A 466-amino-acid chain; its full sequence is Glycine--tRNA ligase (466 aa).

Substrate contacts are provided by Arg105 and Glu168. Residues 200–202 (RNE), 210–215 (FRTREF), 287–288 (EL), and 331–334 (GLTR) contribute to the ATP site. Position 215-219 (215-219 (FEQME)) interacts with substrate. A substrate-binding site is contributed by 327-331 (EPAAG).

The protein belongs to the class-II aminoacyl-tRNA synthetase family. In terms of assembly, homodimer.

It is found in the cytoplasm. The catalysed reaction is tRNA(Gly) + glycine + ATP = glycyl-tRNA(Gly) + AMP + diphosphate. Catalyzes the attachment of glycine to tRNA(Gly). In Nocardia farcinica (strain IFM 10152), this protein is Glycine--tRNA ligase.